The chain runs to 84 residues: Small ribosomal subunit protein bS16c (84 aa).

It belongs to the bacterial ribosomal protein bS16 family.

The protein localises to the plastid. Its subcellular location is the chloroplast. This Mesostigma viride (Green alga) protein is Small ribosomal subunit protein bS16c.